The chain runs to 303 residues: Taste receptor type 2 member 13 (303 aa).

At 1–7 (MESALPS) the chain is on the extracellular side. A helical transmembrane segment spans residues 8 to 28 (IFTLVIIAEFIIGNLSNGFIV). Topologically, residues 29–55 (LINCIDWVSKRELSSVDKLLIILAISR) are cytoplasmic. Residues 56–76 (IGLIWEILVSWFLALHSLAIF) form a helical membrane-spanning segment. Residues 77–85 (VSGTGLRIM) are Extracellular-facing. A helical membrane pass occupies residues 86-106 (IFSWIVSNHFNLWLATILSIF). Over 107–128 (YLLKIASFSSPAFLYLKRRVNK) the chain is Cytoplasmic. Residues 129-149 (VILMILLGTLVFLFLNLIQIN) traverse the membrane as a helical segment. Residues 150-184 (MLIKDWLDRYERNTTWNFSMSDFETFSVSVRFTMT) are Extracellular-facing. 2 N-linked (GlcNAc...) asparagine glycosylation sites follow: Asn-162 and Asn-166. Residues 185–205 (MFSLTPFTVAFISFLLLVFSL) traverse the membrane as a helical segment. Topologically, residues 206–232 (QKHLQKMQLNYKGHRDPRTKVHTNALK) are cytoplasmic. The chain crosses the membrane as a helical span at residues 233-253 (IVISFLLFYASFFLSILISWI). Residues 254–261 (SELYQNTV) are Extracellular-facing. Residues 262–282 (IYMLCETIGAFYPSSHSFLLI) form a helical membrane-spanning segment. The Cytoplasmic portion of the chain corresponds to 283 to 303 (LGNAKLRQAFLLVAAKVWAKR).

This sequence belongs to the G-protein coupled receptor T2R family.

It localises to the membrane. Receptor that may play a role in the perception of bitterness and is gustducin-linked. May play a role in sensing the chemical composition of the gastrointestinal content. The activity of this receptor may stimulate alpha gustducin, mediate PLC-beta-2 activation and lead to the gating of TRPM5. The protein is Taste receptor type 2 member 13 (TAS2R13) of Pan paniscus (Pygmy chimpanzee).